An 89-amino-acid chain; its full sequence is Small membrane A-kinase anchor protein (89 aa).

Positions 1 to 29 (MGCMKSKRRDPTQNSDSSEKVDGKPGKHG) are disordered. G2 carries the N-myristoyl glycine lipid modification. Over residues 17 to 29 (SSEKVDGKPGKHG) the composition is skewed to basic and acidic residues.

It belongs to the small membrane AKAP family. May be palmitoylated at Cys-3.

Its subcellular location is the cell membrane. Binds to type I regulatory subunits of protein kinase A and may anchor/target them to the plasma membrane. In Danio rerio (Zebrafish), this protein is Small membrane A-kinase anchor protein.